A 271-amino-acid polypeptide reads, in one-letter code: Plasmanylethanolamine desaturase 1 (271 aa).

Residues 1 to 25 are disordered; sequence MAGAEDAPGRQPELDEDETAEGRRW. 3 helical membrane-spanning segments follow: residues 48 to 68, 75 to 95, and 166 to 186; these read WCSVILCFSLIAHNLVHLLLL, PLVILGVVAGALVADFLSGLV, and LYPWECFVFCLTIFGTFTNQI. Positions 187–191 match the Histidine box-1 motif; it reads HKWSH. The Histidine box-2 signature appears at 214 to 218; the sequence is HHRIH.

This sequence belongs to the fatty acid desaturase CarF family.

The protein resides in the endoplasmic reticulum membrane. The enzyme catalyses a 1-(1,2-saturated alkyl)-2-acyl-sn-glycero-3-phosphoethanolamine + 2 Fe(II)-[cytochrome b5] + O2 + 2 H(+) = a 1-O-(1Z-alkenyl)-2-acyl-sn-glycero-3-phosphoethanolamine + 2 Fe(III)-[cytochrome b5] + 2 H2O. It carries out the reaction a 1-O-hexadecyl-2-acyl-sn-glycero-3-phosphoethanolamine + 2 Fe(II)-[cytochrome b5] + O2 + 2 H(+) = a 1-O-(1Z-hexadecenyl)-2-acyl-sn-glycero-3-phosphoethanolamine + 2 Fe(III)-[cytochrome b5] + 2 H2O. The catalysed reaction is a 1-O-octadecyl-2-acyl-sn-glycero-3-phosphoethanolamine + 2 Fe(II)-[cytochrome b5] + O2 + 2 H(+) = a 1-O-(1Z-octadecenyl)-2-acyl-sn-glycero-3-phosphoethanolamine + 2 Fe(III)-[cytochrome b5] + 2 H2O. It catalyses the reaction a 1-O-(9Z-octadecenyl)-2-acyl-sn-glycero-3-phosphoethanolamine + 2 Fe(II)-[cytochrome b5] + O2 + 2 H(+) = a 1-O-(1Z,9Z-octadecadienyl)-2-acyl-sn-glycero-3-phosphoethanolamine + 2 Fe(III)-[cytochrome b5] + 2 H2O. It participates in lipid metabolism; fatty acid metabolism. Plasmanylethanolamine desaturase involved in plasmalogen biogenesis in the endoplasmic reticulum membrane. Plasmalogens are glycerophospholipids with a hydrocarbon chain linked by a vinyl ether bond at the glycerol sn-1 position, and are involved in antioxidative and signaling mechanisms. The sequence is that of Plasmanylethanolamine desaturase 1 from Mus musculus (Mouse).